We begin with the raw amino-acid sequence, 482 residues long: tRNA sulfurtransferase (482 aa).

Positions Leu61–Arg165 constitute a THUMP domain. Residues Leu183–Ile184, Lys265, Gly287, and Gln296 each bind ATP. A disulfide bridge connects residues Cys344 and Cys456. The Rhodanese domain occupies Phe404–Pro482. The Cysteine persulfide intermediate role is filled by Cys456.

It belongs to the ThiI family.

The protein resides in the cytoplasm. The catalysed reaction is [ThiI sulfur-carrier protein]-S-sulfanyl-L-cysteine + a uridine in tRNA + 2 reduced [2Fe-2S]-[ferredoxin] + ATP + H(+) = [ThiI sulfur-carrier protein]-L-cysteine + a 4-thiouridine in tRNA + 2 oxidized [2Fe-2S]-[ferredoxin] + AMP + diphosphate. It carries out the reaction [ThiS sulfur-carrier protein]-C-terminal Gly-Gly-AMP + S-sulfanyl-L-cysteinyl-[cysteine desulfurase] + AH2 = [ThiS sulfur-carrier protein]-C-terminal-Gly-aminoethanethioate + L-cysteinyl-[cysteine desulfurase] + A + AMP + 2 H(+). It participates in cofactor biosynthesis; thiamine diphosphate biosynthesis. Catalyzes the ATP-dependent transfer of a sulfur to tRNA to produce 4-thiouridine in position 8 of tRNAs, which functions as a near-UV photosensor. Also catalyzes the transfer of sulfur to the sulfur carrier protein ThiS, forming ThiS-thiocarboxylate. This is a step in the synthesis of thiazole, in the thiamine biosynthesis pathway. The sulfur is donated as persulfide by IscS. This chain is tRNA sulfurtransferase, found in Escherichia coli O9:H4 (strain HS).